We begin with the raw amino-acid sequence, 276 residues long: MPELPEVENVRRTLENLVTGKTIEDVIVTYPKIVKRPDDAEIFKEMLKGEKIENIKRRGKFLLLYVTNYVIVSHLRMEGKFLLHQEDEPIDKHTHVRFLFTDGTELHYKDVRKFGTMHLFKKGEEMNQMPLADLGPEPFDAEMTPQYLQERLQKTNRKIKVVLLDQRLLVGLGNIYVDEVLFRSQIHPEREASSLTVEEIERIYEATVTTLGEAVKRGGSTIRTYINSQGQIGSFQELLNVYGKKGEPCVTCGTILEKTVVGGRGTHYCPICQPRI.

Proline 2 acts as the Schiff-base intermediate with DNA in catalysis. Residue glutamate 3 is the Proton donor of the active site. The Proton donor; for beta-elimination activity role is filled by lysine 60. Histidine 93 and arginine 112 together coordinate DNA. An FPG-type zinc finger spans residues 240–274 (NVYGKKGEPCVTCGTILEKTVVGGRGTHYCPICQP). Catalysis depends on arginine 264, which acts as the Proton donor; for delta-elimination activity.

The protein belongs to the FPG family. In terms of assembly, monomer. Requires Zn(2+) as cofactor.

The enzyme catalyses Hydrolysis of DNA containing ring-opened 7-methylguanine residues, releasing 2,6-diamino-4-hydroxy-5-(N-methyl)formamidopyrimidine.. It catalyses the reaction 2'-deoxyribonucleotide-(2'-deoxyribose 5'-phosphate)-2'-deoxyribonucleotide-DNA = a 3'-end 2'-deoxyribonucleotide-(2,3-dehydro-2,3-deoxyribose 5'-phosphate)-DNA + a 5'-end 5'-phospho-2'-deoxyribonucleoside-DNA + H(+). Functionally, involved in base excision repair of DNA damaged by oxidation or by mutagenic agents. Acts as a DNA glycosylase that recognizes and removes damaged bases. Has a preference for oxidized purines, such as 7,8-dihydro-8-oxoguanine (8-oxoG). Has AP (apurinic/apyrimidinic) lyase activity and introduces nicks in the DNA strand. Cleaves the DNA backbone by beta-delta elimination to generate a single-strand break at the site of the removed base with both 3'- and 5'-phosphates. The polypeptide is Formamidopyrimidine-DNA glycosylase (Bacillus cereus (strain ATCC 14579 / DSM 31 / CCUG 7414 / JCM 2152 / NBRC 15305 / NCIMB 9373 / NCTC 2599 / NRRL B-3711)).